A 173-amino-acid chain; its full sequence is Co-chaperone protein HscB homolog (173 aa).

The region spanning asparagine 2–leucine 74 is the J domain.

The protein belongs to the HscB family. Interacts with HscA and stimulates its ATPase activity.

Functionally, co-chaperone involved in the maturation of iron-sulfur cluster-containing proteins. Seems to help targeting proteins to be folded toward HscA. This is Co-chaperone protein HscB homolog from Shewanella loihica (strain ATCC BAA-1088 / PV-4).